A 481-amino-acid chain; its full sequence is Proline--tRNA ligase (481 aa).

The protein belongs to the class-II aminoacyl-tRNA synthetase family. ProS type 3 subfamily. In terms of assembly, homodimer.

It is found in the cytoplasm. The catalysed reaction is tRNA(Pro) + L-proline + ATP = L-prolyl-tRNA(Pro) + AMP + diphosphate. In terms of biological role, catalyzes the attachment of proline to tRNA(Pro) in a two-step reaction: proline is first activated by ATP to form Pro-AMP and then transferred to the acceptor end of tRNA(Pro). This Chloroherpeton thalassium (strain ATCC 35110 / GB-78) protein is Proline--tRNA ligase.